A 468-amino-acid chain; its full sequence is tRNA modification GTPase MnmE (468 aa).

Residues arginine 29, glutamate 97, and lysine 136 each coordinate (6S)-5-formyl-5,6,7,8-tetrahydrofolate. In terms of domain architecture, TrmE-type G spans glycine 232–glutamate 390. K(+) is bound at residue asparagine 242. GTP-binding positions include asparagine 242 to serine 247, threonine 261 to threonine 267, and aspartate 286 to glycine 289. Serine 246 is a Mg(2+) binding site. Residues threonine 261, leucine 263, and threonine 266 each contribute to the K(+) site. Threonine 267 contributes to the Mg(2+) binding site. (6S)-5-formyl-5,6,7,8-tetrahydrofolate is bound at residue lysine 468.

This sequence belongs to the TRAFAC class TrmE-Era-EngA-EngB-Septin-like GTPase superfamily. TrmE GTPase family. Homodimer. Heterotetramer of two MnmE and two MnmG subunits. K(+) is required as a cofactor.

The protein resides in the cytoplasm. Exhibits a very high intrinsic GTPase hydrolysis rate. Involved in the addition of a carboxymethylaminomethyl (cmnm) group at the wobble position (U34) of certain tRNAs, forming tRNA-cmnm(5)s(2)U34. The sequence is that of tRNA modification GTPase MnmE from Magnetococcus marinus (strain ATCC BAA-1437 / JCM 17883 / MC-1).